Reading from the N-terminus, the 663-residue chain is Probable methylenetetrahydrofolate reductase (NADPH) (663 aa).

Glutamate 76 acts as the Proton donor/acceptor in catalysis. NAD(+) is bound by residues 76-81 (EFFPPR) and 107-108 (TW). Threonine 107 carries the post-translational modification Phosphothreonine. FAD-binding positions include 107–108 (TW), histidine 141, 171–173 (RGD), 187–188 (RA), tyrosine 210, 214–217 (HPQA), aspartate 223, and lysine 230. Aspartate 173 is a substrate binding site. Positions 241, 334, and 338 each coordinate substrate. Serine 408 is subject to Phosphoserine. A Phosphothreonine modification is found at threonine 465. Residues 477–480 (QPET), 497–501 (TVNSQ), threonine 578, and threonine 591 each bind S-adenosyl-L-methionine.

It belongs to the methylenetetrahydrofolate reductase family. The cofactor is FAD.

The enzyme catalyses (6S)-5-methyl-5,6,7,8-tetrahydrofolate + NADP(+) = (6R)-5,10-methylene-5,6,7,8-tetrahydrofolate + NADPH + H(+). It participates in one-carbon metabolism; tetrahydrofolate interconversion. In Caenorhabditis elegans, this protein is Probable methylenetetrahydrofolate reductase (NADPH).